Consider the following 109-residue polypeptide: Large ribosomal subunit protein uL22 (109 aa).

Belongs to the universal ribosomal protein uL22 family. As to quaternary structure, part of the 50S ribosomal subunit.

Its function is as follows. This protein binds specifically to 23S rRNA; its binding is stimulated by other ribosomal proteins, e.g. L4, L17, and L20. It is important during the early stages of 50S assembly. It makes multiple contacts with different domains of the 23S rRNA in the assembled 50S subunit and ribosome. Functionally, the globular domain of the protein is located near the polypeptide exit tunnel on the outside of the subunit, while an extended beta-hairpin is found that lines the wall of the exit tunnel in the center of the 70S ribosome. The protein is Large ribosomal subunit protein uL22 of Dehalococcoides mccartyi (strain ATCC BAA-2100 / JCM 16839 / KCTC 5957 / BAV1).